The sequence spans 484 residues: Sulfoacetaldehyde dehydrogenase (484 aa).

NAD(+)-binding positions include 105–110 (LTPVTN), Gly-188, and Gly-206. Cys-239 serves as the catalytic Nucleophile. NAD(+) is bound by residues Glu-332 and Leu-412.

The protein belongs to the aldehyde dehydrogenase family.

It carries out the reaction sulfoacetaldehyde + NAD(+) + CoA = sulfoacetyl-CoA + NADH + H(+). Its function is as follows. Part of a variant of the sulfo-TK pathway, a D-sulfoquinovose degradation pathway that produces sulfoacetate. Catalyzes the oxidation of sulfoacetaldehyde (SA) to sulfoacetyl-coenzyme A (sulfoacetyl-CoA). Is highly specific for NAD(+), with only residual (1%) activity with NADP(+). Cannot use acetaldehyde. This Acholeplasma sp protein is Sulfoacetaldehyde dehydrogenase.